The primary structure comprises 373 residues: Alcohol dehydrogenase 2 (373 aa).

8 residues coordinate Zn(2+): Cys-47, Thr-49, His-69, Cys-99, Cys-102, Cys-105, Cys-113, and Cys-177. 2 residues coordinate an alcohol: Thr-49 and His-69. Residue Thr-49 coordinates NAD(+). NAD(+) is bound by residues 202-207 (GLGAVG), Asp-226, Lys-231, Thr-272, Phe-316, and Arg-366.

Belongs to the zinc-containing alcohol dehydrogenase family. In terms of assembly, homodimer. Requires Zn(2+) as cofactor.

It localises to the cytoplasm. The catalysed reaction is a primary alcohol + NAD(+) = an aldehyde + NADH + H(+). The enzyme catalyses a secondary alcohol + NAD(+) = a ketone + NADH + H(+). The protein is Alcohol dehydrogenase 2 (ADH2) of Hordeum vulgare (Barley).